We begin with the raw amino-acid sequence, 382 residues long: Galactokinase (382 aa).

34–37 provides a ligand contact to substrate; the sequence is EHTD. 124 to 130 contacts ATP; it reads GAGLSSS. Mg(2+)-binding residues include Ser130 and Glu162. Asp174 serves as the catalytic Proton acceptor. Substrate is bound at residue Tyr223.

This sequence belongs to the GHMP kinase family. GalK subfamily.

It is found in the cytoplasm. The enzyme catalyses alpha-D-galactose + ATP = alpha-D-galactose 1-phosphate + ADP + H(+). The protein operates within carbohydrate metabolism; galactose metabolism. Catalyzes the transfer of the gamma-phosphate of ATP to D-galactose to form alpha-D-galactose-1-phosphate (Gal-1-P). This Escherichia coli (strain SMS-3-5 / SECEC) protein is Galactokinase.